A 390-amino-acid polypeptide reads, in one-letter code: Alkanesulfonate monooxygenase (390 aa).

The protein belongs to the SsuD family.

It catalyses the reaction an alkanesulfonate + FMNH2 + O2 = an aldehyde + FMN + sulfite + H2O + 2 H(+). In terms of biological role, catalyzes the desulfonation of aliphatic sulfonates. The protein is Alkanesulfonate monooxygenase of Cupriavidus taiwanensis (strain DSM 17343 / BCRC 17206 / CCUG 44338 / CIP 107171 / LMG 19424 / R1) (Ralstonia taiwanensis (strain LMG 19424)).